The primary structure comprises 1158 residues: ATP-dependent helicase/deoxyribonuclease subunit B (1158 aa).

The UvrD-like helicase ATP-binding domain maps to 1–275; it reads MTLHAYLGRA…QYFNQLYRFN (275 aa). Residue 8–15 coordinates ATP; the sequence is GRAGTGKS. The UvrD-like helicase C-terminal domain occupies 269–583; that stretch reads NQLYRFNNQD…SIGTMDLAKV (315 aa). The [4Fe-4S] cluster site is built by C784, C1112, C1115, and C1121.

This sequence belongs to the helicase family. AddB/RexB type 1 subfamily. Heterodimer of AddA and AddB. The cofactor is Mg(2+). [4Fe-4S] cluster serves as cofactor.

In terms of biological role, the heterodimer acts as both an ATP-dependent DNA helicase and an ATP-dependent, dual-direction single-stranded exonuclease. Recognizes the chi site generating a DNA molecule suitable for the initiation of homologous recombination. The AddB subunit has 5' -&gt; 3' nuclease activity but not helicase activity. This chain is ATP-dependent helicase/deoxyribonuclease subunit B, found in Staphylococcus aureus (strain MW2).